The chain runs to 171 residues: Lipoprotein signal peptidase (171 aa).

A run of 3 helical transmembrane segments spans residues 12 to 32, 67 to 87, and 93 to 113; these read WYWVAVLVFFADQLSKQWVLA, WQRWLFTIVAVGFSTLLTVWL, and SLLKLNLAYTLVIGGALGNLV. Catalysis depends on residues Asp123 and Asp141. A helical transmembrane segment spans residues 137-157; that stretch reads FNIADSAICIGAVLIIWDAFL.

The protein belongs to the peptidase A8 family.

It is found in the cell inner membrane. The enzyme catalyses Release of signal peptides from bacterial membrane prolipoproteins. Hydrolyzes -Xaa-Yaa-Zaa-|-(S,diacylglyceryl)Cys-, in which Xaa is hydrophobic (preferably Leu), and Yaa (Ala or Ser) and Zaa (Gly or Ala) have small, neutral side chains.. Its pathway is protein modification; lipoprotein biosynthesis (signal peptide cleavage). Functionally, this protein specifically catalyzes the removal of signal peptides from prolipoproteins. This Shewanella baltica (strain OS195) protein is Lipoprotein signal peptidase.